We begin with the raw amino-acid sequence, 203 residues long: Proteasome subunit beta 2 (203 aa).

Positions methionine 1–alanine 9 are cleaved as a propeptide — removed in mature form; by autocatalysis. The active-site Nucleophile is threonine 10.

The protein belongs to the peptidase T1B family. The 20S proteasome core is composed of 14 alpha and 14 beta subunits that assemble into four stacked heptameric rings, resulting in a barrel-shaped structure. The two inner rings, each composed of seven catalytic beta subunits, are sandwiched by two outer rings, each composed of seven alpha subunits. The catalytic chamber with the active sites is on the inside of the barrel. Has a gated structure, the ends of the cylinder being occluded by the N-termini of the alpha-subunits. Is capped at one or both ends by the proteasome regulatory ATPase, PAN.

Its subcellular location is the cytoplasm. The enzyme catalyses Cleavage of peptide bonds with very broad specificity.. With respect to regulation, the formation of the proteasomal ATPase PAN-20S proteasome complex, via the docking of the C-termini of PAN into the intersubunit pockets in the alpha-rings, triggers opening of the gate for substrate entry. Interconversion between the open-gate and close-gate conformations leads to a dynamic regulation of the 20S proteasome proteolysis activity. In terms of biological role, component of the proteasome core, a large protease complex with broad specificity involved in protein degradation. The chain is Proteasome subunit beta 2 from Pyrobaculum neutrophilum (strain DSM 2338 / JCM 9278 / NBRC 100436 / V24Sta) (Thermoproteus neutrophilus).